The following is an 875-amino-acid chain: Probable ubiquitin carboxyl-terminal hydrolase 7 (875 aa).

The UBP-type zinc-finger motif lies at 54 to 167 (KECSHLKKGV…RDVQQFICSN (114 aa)). Residues cysteine 56, histidine 58, cysteine 83, cysteine 86, cysteine 101, cysteine 104, cysteine 109, histidine 116, histidine 120, histidine 127, cysteine 140, and cysteine 143 each contribute to the Zn(2+) site. The USP domain occupies 208 to 875 (PGLKNLGATC…EAYMLFYERV (668 aa)). The active-site Nucleophile is cysteine 217. Serine 333 and serine 337 each carry phosphoserine. The disordered stretch occupies residues 396-486 (YSKELSQSSD…ASPKKEVLKS (91 aa)). Residues 401–438 (SQSSDSSQHQHDSFLPANSSPLAASSTKSLPSSELLDS) are compositionally biased toward low complexity. Over residues 473–484 (NHEEASPKKEVL) the composition is skewed to basic and acidic residues. Serine 486 and serine 493 each carry phosphoserine. Residues 575–586 (RSRFSRSPKKSS) are compositionally biased toward basic residues. Residues 575–628 (RSRFSRSPKKSSVKIVVDNANDDTDQAPTTNSSSLNENLLGGHASENDKSLKQS) form a disordered region. A compositionally biased stretch (polar residues) spans 600 to 611 (QAPTTNSSSLNE). Position 645 is a phosphoserine (serine 645). The active-site Proton acceptor is histidine 812.

Belongs to the peptidase C19 family.

The catalysed reaction is Thiol-dependent hydrolysis of ester, thioester, amide, peptide and isopeptide bonds formed by the C-terminal Gly of ubiquitin (a 76-residue protein attached to proteins as an intracellular targeting signal).. This is Probable ubiquitin carboxyl-terminal hydrolase 7 (ubp7) from Schizosaccharomyces pombe (strain 972 / ATCC 24843) (Fission yeast).